The sequence spans 244 residues: DNA polymerase sliding clamp (244 aa).

Belongs to the PCNA family. In terms of assembly, homotrimer. The subunits circularize to form a toroid; DNA passes through its center. Replication factor C (RFC) is required to load the toroid on the DNA.

Functionally, sliding clamp subunit that acts as a moving platform for DNA processing. Responsible for tethering the catalytic subunit of DNA polymerase and other proteins to DNA during high-speed replication. This chain is DNA polymerase sliding clamp, found in Methanobrevibacter smithii (strain ATCC 35061 / DSM 861 / OCM 144 / PS).